The following is a 123-amino-acid chain: Small ribosomal subunit protein uS11 (123 aa).

Belongs to the universal ribosomal protein uS11 family. In terms of assembly, part of the 30S ribosomal subunit. Interacts with proteins S7 and S18. Binds to IF-3.

Functionally, located on the platform of the 30S subunit, it bridges several disparate RNA helices of the 16S rRNA. Forms part of the Shine-Dalgarno cleft in the 70S ribosome. This is Small ribosomal subunit protein uS11 from Coxiella burnetii (strain CbuG_Q212) (Coxiella burnetii (strain Q212)).